The sequence spans 322 residues: NADH-quinone oxidoreductase subunit H (322 aa).

8 helical membrane passes run 12–32, 79–99, 111–131, 151–171, 183–203, 234–254, 262–282, and 301–321; these read IGKALIVLVGIVGAGAFMSFI, IFVLAPIIAFTAFILAFAVVP, VGLLYILAIAGLAVYAVLFAG, LSYEVFLGLSLMGIVIQTGSF, LWNVIPQILGFITFLFAGVAV, FFVGEYIGIVLISSLIVTLFF, LPPFIWFALKTACFMVFFILL, and VCLPLTLLNMLVTGAVVLMNA.

Belongs to the complex I subunit 1 family. As to quaternary structure, NDH-1 is composed of 14 different subunits. Subunits NuoA, H, J, K, L, M, N constitute the membrane sector of the complex.

Its subcellular location is the cell inner membrane. It carries out the reaction a quinone + NADH + 5 H(+)(in) = a quinol + NAD(+) + 4 H(+)(out). Functionally, NDH-1 shuttles electrons from NADH, via FMN and iron-sulfur (Fe-S) centers, to quinones in the respiratory chain. The immediate electron acceptor for the enzyme in this species is believed to be ubiquinone. Couples the redox reaction to proton translocation (for every two electrons transferred, four hydrogen ions are translocated across the cytoplasmic membrane), and thus conserves the redox energy in a proton gradient. This subunit may bind ubiquinone. The polypeptide is NADH-quinone oxidoreductase subunit H (Aeromonas hydrophila subsp. hydrophila (strain ATCC 7966 / DSM 30187 / BCRC 13018 / CCUG 14551 / JCM 1027 / KCTC 2358 / NCIMB 9240 / NCTC 8049)).